The following is a 345-amino-acid chain: Phosphate acyltransferase (345 aa).

The protein belongs to the PlsX family. As to quaternary structure, homodimer. Probably interacts with PlsY.

The protein resides in the cytoplasm. It carries out the reaction a fatty acyl-[ACP] + phosphate = an acyl phosphate + holo-[ACP]. The protein operates within lipid metabolism; phospholipid metabolism. Functionally, catalyzes the reversible formation of acyl-phosphate (acyl-PO(4)) from acyl-[acyl-carrier-protein] (acyl-ACP). This enzyme utilizes acyl-ACP as fatty acyl donor, but not acyl-CoA. This is Phosphate acyltransferase from Levilactobacillus brevis (strain ATCC 367 / BCRC 12310 / CIP 105137 / JCM 1170 / LMG 11437 / NCIMB 947 / NCTC 947) (Lactobacillus brevis).